The following is a 122-amino-acid chain: Protein POLR1D, isoform 2 (122 aa).

Methionine 1 bears the N-acetylmethionine mark. Residues 48-122 (INTIKNTLPS…DKYEKRSNRR (75 aa)) form a disordered region. A compositionally biased stretch (basic and acidic residues) spans 57 to 83 (SHKEQDHEQKEGDKEPAKSQAQKEENP). Positions 84–96 (KKHRSHPYKHSFR) are enriched in basic residues. Serine 104 carries the post-translational modification Phosphoserine. Residues 110 to 122 (SSQDKYEKRSNRR) are compositionally biased toward basic and acidic residues.

The sequence is that of Protein POLR1D, isoform 2 (POLR1D) from Homo sapiens (Human).